The primary structure comprises 268 residues: MSNKVHLGHTARKRFGQNFLTDGNVIDRIVGAIAPDNHHVMVEIGPGLGALTEPVAEAVDNLTVVELDRDLVERLHHHPVLKDKLTIHQGDALQFDFGQLSVPGKKMKVFGNLPYNISTPLMFHLFEFAEQIETMHFMLQKEVVLRLSASPGCKAYGRLTVMAQYFCQVVPVLEVPPHSFTPAPKVDSAVVRLLPYAVKPFPCKDVTVLRHLCTTAFNMRRKTLRNNLKHMLSDDEFEQLGIDSSQRPEQISVQQYVAMANMVCDKKA.

Residues asparagine 18, leucine 20, glycine 45, glutamate 66, aspartate 91, and asparagine 112 each contribute to the S-adenosyl-L-methionine site.

This sequence belongs to the class I-like SAM-binding methyltransferase superfamily. rRNA adenine N(6)-methyltransferase family. RsmA subfamily.

Its subcellular location is the cytoplasm. The enzyme catalyses adenosine(1518)/adenosine(1519) in 16S rRNA + 4 S-adenosyl-L-methionine = N(6)-dimethyladenosine(1518)/N(6)-dimethyladenosine(1519) in 16S rRNA + 4 S-adenosyl-L-homocysteine + 4 H(+). In terms of biological role, specifically dimethylates two adjacent adenosines (A1518 and A1519) in the loop of a conserved hairpin near the 3'-end of 16S rRNA in the 30S particle. May play a critical role in biogenesis of 30S subunits. The protein is Ribosomal RNA small subunit methyltransferase A of Shewanella baltica (strain OS185).